The primary structure comprises 153 residues: Small ribosomal subunit protein eS19 (153 aa).

The protein belongs to the eukaryotic ribosomal protein eS19 family. In terms of assembly, part of the 30S ribosomal subunit.

Its function is as follows. May be involved in maturation of the 30S ribosomal subunit. The sequence is that of Small ribosomal subunit protein eS19 from Aeropyrum pernix (strain ATCC 700893 / DSM 11879 / JCM 9820 / NBRC 100138 / K1).